Reading from the N-terminus, the 216-residue chain is Somatotropin (216 aa).

The signal sequence occupies residues M1–A26. Position 45 (H45) interacts with Zn(2+). C78 and C189 are oxidised to a cystine. A Phosphoserine modification is found at S131. A Zn(2+)-binding site is contributed by E198. C206 and C214 form a disulfide bridge.

It belongs to the somatotropin/prolactin family.

The protein localises to the secreted. Plays an important role in growth control. Its major role in stimulating body growth is to stimulate the liver and other tissues to secrete IGF1. It stimulates both the differentiation and proliferation of myoblasts. It also stimulates amino acid uptake and protein synthesis in muscle and other tissues. In Hippopotamus amphibius (Hippopotamus), this protein is Somatotropin (GH1).